Here is a 284-residue protein sequence, read N- to C-terminus: ATP phosphoribosyltransferase (284 aa).

Belongs to the ATP phosphoribosyltransferase family. Long subfamily. Mg(2+) serves as cofactor.

The protein resides in the cytoplasm. The catalysed reaction is 1-(5-phospho-beta-D-ribosyl)-ATP + diphosphate = 5-phospho-alpha-D-ribose 1-diphosphate + ATP. It participates in amino-acid biosynthesis; L-histidine biosynthesis; L-histidine from 5-phospho-alpha-D-ribose 1-diphosphate: step 1/9. With respect to regulation, feedback inhibited by histidine. Functionally, catalyzes the condensation of ATP and 5-phosphoribose 1-diphosphate to form N'-(5'-phosphoribosyl)-ATP (PR-ATP). Has a crucial role in the pathway because the rate of histidine biosynthesis seems to be controlled primarily by regulation of HisG enzymatic activity. This is ATP phosphoribosyltransferase from Methanococcoides burtonii (strain DSM 6242 / NBRC 107633 / OCM 468 / ACE-M).